Consider the following 151-residue polypeptide: Small ribosomal subunit protein uS9 (151 aa).

The protein belongs to the universal ribosomal protein uS9 family.

The polypeptide is Small ribosomal subunit protein uS9 (rps9) (Aeropyrum pernix (strain ATCC 700893 / DSM 11879 / JCM 9820 / NBRC 100138 / K1)).